Reading from the N-terminus, the 296-residue chain is Light-independent protochlorophyllide reductase iron-sulfur ATP-binding protein (296 aa).

ATP-binding positions include 10 to 15 (GIGKST) and K39. S14 is a Mg(2+) binding site. Residues C95 and C129 each coordinate [4Fe-4S] cluster. 180 to 181 (NR) contacts ATP.

It belongs to the NifH/BchL/ChlL family. As to quaternary structure, homodimer. Protochlorophyllide reductase is composed of three subunits; ChlL, ChlN and ChlB. It depends on [4Fe-4S] cluster as a cofactor.

The protein resides in the plastid. It is found in the chloroplast. It catalyses the reaction chlorophyllide a + oxidized 2[4Fe-4S]-[ferredoxin] + 2 ADP + 2 phosphate = protochlorophyllide a + reduced 2[4Fe-4S]-[ferredoxin] + 2 ATP + 2 H2O. It functions in the pathway porphyrin-containing compound metabolism; chlorophyll biosynthesis (light-independent). In terms of biological role, component of the dark-operative protochlorophyllide reductase (DPOR) that uses Mg-ATP and reduced ferredoxin to reduce ring D of protochlorophyllide (Pchlide) to form chlorophyllide a (Chlide). This reaction is light-independent. The L component serves as a unique electron donor to the NB-component of the complex, and binds Mg-ATP. In Chlorokybus atmophyticus (Soil alga), this protein is Light-independent protochlorophyllide reductase iron-sulfur ATP-binding protein.